The primary structure comprises 328 residues: Tetraacyldisaccharide 4'-kinase (328 aa).

55 to 62 (TAGGNGKT) provides a ligand contact to ATP.

It belongs to the LpxK family.

The enzyme catalyses a lipid A disaccharide + ATP = a lipid IVA + ADP + H(+). The protein operates within glycolipid biosynthesis; lipid IV(A) biosynthesis; lipid IV(A) from (3R)-3-hydroxytetradecanoyl-[acyl-carrier-protein] and UDP-N-acetyl-alpha-D-glucosamine: step 6/6. Its function is as follows. Transfers the gamma-phosphate of ATP to the 4'-position of a tetraacyldisaccharide 1-phosphate intermediate (termed DS-1-P) to form tetraacyldisaccharide 1,4'-bis-phosphate (lipid IVA). The chain is Tetraacyldisaccharide 4'-kinase from Shigella boydii serotype 4 (strain Sb227).